The chain runs to 391 residues: Casein kinase II subunit alpha (391 aa).

Residues 36–41 form an interaction with beta subunit region; the sequence is QDDYQL. The 286-residue stretch at 39 to 324 folds into the Protein kinase domain; it reads YQLVRKLGRG…AREAMEHPYF (286 aa). Residues 45–53 and K68 contribute to the ATP site; that span reads LGRGKYSEV. D156 serves as the catalytic Proton acceptor. Phosphothreonine; by CDK1 occurs at positions 344 and 360. A phosphoserine; by CDK1 mark is found at S362 and S370.

The protein belongs to the protein kinase superfamily. Ser/Thr protein kinase family. CK2 subfamily. Heterotetramer composed of two catalytic subunits (alpha chain and/or alpha' chain) and two regulatory subunits (beta chains). The tetramer can exist as a combination of 2 alpha/2 beta, 2 alpha'/2 beta or 1 alpha/1 alpha'/2 beta subunits. Also part of a CK2-SPT16-SSRP1 complex composed of SSRP1, SUPT16H, CSNK2A1, CSNK2A2 and CSNK2B, which forms following UV irradiation. Interacts with RNPS1. Interacts with SNAI1. Interacts with PML. Interacts with CCAR2. Interacts with HIRIP3. In terms of processing, phosphorylated at Thr-344, Thr-360, Ser-362 and Ser-370 by CDK1 in prophase and metaphase and dephosphorylated during anaphase. Phosphorylation does not directly affect casein kinase 2 activity, but may contribute to its regulation by forming binding sites for interacting proteins and/or targeting it to different compartments.

It localises to the nucleus. The enzyme catalyses L-seryl-[protein] + ATP = O-phospho-L-seryl-[protein] + ADP + H(+). It carries out the reaction L-threonyl-[protein] + ATP = O-phospho-L-threonyl-[protein] + ADP + H(+). With respect to regulation, constitutively active protein kinase whose activity is not directly affected by phosphorylation. Seems to be regulated by level of expression and localization. Functionally, catalytic subunit of a constitutively active serine/threonine-protein kinase complex that phosphorylates a large number of substrates containing acidic residues C-terminal to the phosphorylated serine or threonine. Regulates numerous cellular processes, such as cell cycle progression, apoptosis and transcription, as well as viral infection. May act as a regulatory node which integrates and coordinates numerous signals leading to an appropriate cellular response. During mitosis, functions as a component of the p53/TP53-dependent spindle assembly checkpoint (SAC) that maintains cyclin-B-CDK1 activity and G2 arrest in response to spindle damage. Also required for p53/TP53-mediated apoptosis, phosphorylating 'Ser-392' of p53/TP53 following UV irradiation. Phosphorylates a number of DNA repair proteins in response to DNA damage, such as MDC1, MRE11, RAD9A, RAD51 and HTATSF1, promoting their recruitment to DNA damage sites. Can also negatively regulate apoptosis. Phosphorylates the caspases CASP9 and CASP2 and the apoptotic regulator NOL3. Phosphorylation protects CASP9 from cleavage and activation by CASP8, and inhibits the dimerization of CASP2 and activation of CASP8. Phosphorylates YY1, protecting YY1 from cleavage by CASP7 during apoptosis. Regulates transcription by direct phosphorylation of RNA polymerases I, II, III and IV. Also phosphorylates and regulates numerous transcription factors including NF-kappa-B, STAT1, CREB1, IRF1, IRF2, ATF1, ATF4, SRF, MAX, JUN, FOS, MYC and MYB. Phosphorylates Hsp90 and its co-chaperones FKBP4 and CDC37, which is essential for chaperone function. Mediates sequential phosphorylation of FNIP1, promoting its gradual interaction with Hsp90, leading to activate both kinase and non-kinase client proteins of Hsp90. Regulates Wnt signaling by phosphorylating CTNNB1 and the transcription factor LEF1. Acts as an ectokinase that phosphorylates several extracellular proteins. Phosphorylates PML at 'Ser-565' and primes it for ubiquitin-mediated degradation. Plays an important role in the circadian clock function by phosphorylating BMAL1 at 'Ser-90' which is pivotal for its interaction with CLOCK and which controls CLOCK nuclear entry. Phosphorylates FMR1, promoting FMR1-dependent formation of a membraneless compartment. May phosphorylate histone H2A on 'Ser-1'. The polypeptide is Casein kinase II subunit alpha (CSNK2A1) (Oryctolagus cuniculus (Rabbit)).